The following is a 174-amino-acid chain: Calcineurin subunit B (174 aa).

EF-hand domains are found at residues Glu-21–Pro-56, Arg-60–Lys-88, Ser-90–Lys-125, and Glu-131–Ala-166. Ca(2+) contacts are provided by Asp-34, Asp-36, Ser-38, Thr-40, Glu-45, Asp-66, Asp-68, Asn-70, Thr-72, Glu-77, Asp-103, Asp-105, Asp-107, Tyr-109, Glu-114, Asp-144, Asp-146, Asp-148, Arg-150, and Glu-155.

This sequence belongs to the calcineurin regulatory subunit family. Composed of a catalytic subunit (A) and a regulatory subunit (B).

Regulatory subunit of calcineurin, a calcium-dependent, calmodulin stimulated protein phosphatase. Confers calcium sensitivity. In Debaryomyces hansenii (strain ATCC 36239 / CBS 767 / BCRC 21394 / JCM 1990 / NBRC 0083 / IGC 2968) (Yeast), this protein is Calcineurin subunit B (CNB1).